The following is a 272-amino-acid chain: MFGFPTATLLDCHGRYAQNVAFFNVMTEAHKYDPSEATGSSSWDFQSSFRREKLEQKSPESKALQEDSPGVRQKVYDCQECGKSFRQKGSLTLHERIHTGQKPFECTQCGKSFRAKGNLVTHQRIHTGEKPYQCKECGKSFSQRGSLAVHERLHTGQKPYECAICQRSFRNQSNLAVHRRVHSGEKPYRCDQCGKAFSQKGSLIVHIRVHTGLKPYACSHCRKSFHTRGNCLLHGKVHTGETPYLCGQCGKSFTQRGSLAVHQRSCSQRLTL.

Over residues 50–65 (RREKLEQKSPESKALQ) the composition is skewed to basic and acidic residues. The tract at residues 50 to 69 (RREKLEQKSPESKALQEDSP) is disordered. 3 consecutive C2H2-type zinc fingers follow at residues 76–98 (YDCQ…ERIH), 104–126 (FECT…QRIH), and 132–154 (YQCK…ERLH). Cys78, Cys81, His94, His98, Cys106, Cys109, His122, His126, Ser140, Gln143, Gly156, Tyr160, Phe197, Lys200, Leu213, Ala217, Cys246, Cys249, His262, and Cys266 together coordinate Zn(2+). 2 C2H2-type zinc fingers span residues 160–182 (YECA…RRVH) and 188–210 (YRCD…IRVH). A C2H2-type 6 zinc finger spans residues 216–238 (YACSHCRKSFHTRGNCLLHGKVH). Residues 244–266 (YLCGQCGKSFTQRGSLAVHQRSC) form a CCHC-type zinc finger.

Belongs to the krueppel C2H2-type zinc-finger protein family.

Its subcellular location is the nucleus. May be involved in transcriptional regulation. In Mus musculus (Mouse), this protein is Zinc finger protein 32 (Znf32).